The chain runs to 261 residues: 6-carboxyhexanoate--CoA ligase (261 aa).

It belongs to the BioW family. Homodimer. Mg(2+) is required as a cofactor.

The catalysed reaction is heptanedioate + ATP + CoA = 6-carboxyhexanoyl-CoA + AMP + diphosphate. It participates in metabolic intermediate metabolism; pimeloyl-CoA biosynthesis; pimeloyl-CoA from pimelate: step 1/1. Functionally, catalyzes the transformation of pimelate into pimeloyl-CoA with concomitant hydrolysis of ATP to AMP. This Bacillus licheniformis (strain ATCC 14580 / DSM 13 / JCM 2505 / CCUG 7422 / NBRC 12200 / NCIMB 9375 / NCTC 10341 / NRRL NRS-1264 / Gibson 46) protein is 6-carboxyhexanoate--CoA ligase.